Here is a 211-residue protein sequence, read N- to C-terminus: Outer surface protein C (211 aa).

The first 18 residues, 1–18, serve as a signal peptide directing secretion; it reads MKKNTLSAILMTLFLFIS. Cys19 carries N-palmitoyl cysteine lipidation. The S-diacylglycerol cysteine moiety is linked to residue Cys19.

It belongs to the OspC lipoprotein family. As to quaternary structure, homodimer. Interacts with tick I.ricinus salivary protein Iric-1, Iric-2 and Iric-3. Binds human (host) plasminogen.

It is found in the cell outer membrane. The protein resides in the cell surface. Its function is as follows. Major immunodominant protein in mammalian hosts. Required for initial stages of mammalian infection. Inhibits macrophage-mediated phagocytosis of the bacteria. Binds human plasminogen; this probably confers an extracellular protease activity on the bacteria that allows it to traverse tissue. Interaction with tick I.ricinus salivary protein Salp15 protects the bacteria from antibody-mediated killing in vitro and in vivo. This chain is Outer surface protein C, found in Borreliella burgdorferi (Lyme disease spirochete).